The sequence spans 475 residues: Ribulose bisphosphate carboxylase large chain (475 aa).

Residues 1–2 constitute a propeptide that is removed on maturation; the sequence is MS. P3 carries the N-acetylproline modification. K14 carries the N6,N6,N6-trimethyllysine modification. Residues N123 and T173 each contribute to the substrate site. K175 (proton acceptor) is an active-site residue. K177 contributes to the substrate binding site. Residues K201, D203, and E204 each coordinate Mg(2+). K201 is modified (N6-carboxylysine). Residue H294 is the Proton acceptor of the active site. R295, H327, and S379 together coordinate substrate.

It belongs to the RuBisCO large chain family. Type I subfamily. As to quaternary structure, heterohexadecamer of 8 large chains and 8 small chains; disulfide-linked. The disulfide link is formed within the large subunit homodimers. Mg(2+) serves as cofactor. Post-translationally, the disulfide bond which can form in the large chain dimeric partners within the hexadecamer appears to be associated with oxidative stress and protein turnover.

Its subcellular location is the plastid. The protein resides in the chloroplast. The catalysed reaction is 2 (2R)-3-phosphoglycerate + 2 H(+) = D-ribulose 1,5-bisphosphate + CO2 + H2O. It catalyses the reaction D-ribulose 1,5-bisphosphate + O2 = 2-phosphoglycolate + (2R)-3-phosphoglycerate + 2 H(+). In terms of biological role, ruBisCO catalyzes two reactions: the carboxylation of D-ribulose 1,5-bisphosphate, the primary event in carbon dioxide fixation, as well as the oxidative fragmentation of the pentose substrate in the photorespiration process. Both reactions occur simultaneously and in competition at the same active site. The sequence is that of Ribulose bisphosphate carboxylase large chain from Tsuga heterophylla (Western hemlock).